The primary structure comprises 210 residues: Synaptosomal-associated protein 23 (210 aa).

At M1 the chain carries N-acetylmethionine. Residues S5, S20, S23, and S34 each carry the phosphoserine modification. The region spanning 14-76 (HQVTDESLES…REAEKTLTEL (63 aa)) is the t-SNARE coiled-coil homology 1 domain. Residues 23 to 76 (STRRILGLAIESQDAGIKTITMLDEQGEQLNRIEEGMDQINKDMREAEKTLTEL) are a coiled coil. 5 S-palmitoyl cysteine lipidation sites follow: C79, C80, C83, C85, and C87. Residues 104–135 (GDGGDNSPSNVVSKQPSRITNGQPQQTTGAAS) are disordered. The segment covering 109 to 133 (NSPSNVVSKQPSRITNGQPQQTTGA) has biased composition (polar residues). Phosphoserine is present on residues S110 and S160. One can recognise a t-SNARE coiled-coil homology 2 domain in the interval 145 to 207 (DAREDEMEEN…DIANTRAKKL (63 aa)).

This sequence belongs to the SNAP-25 family. Homotetramer (via coiled-coil domain), also forms heterotetramers with STX4 and VAMP3. Found in a complex with VAMP8 and STX1A. Found in a complex with VAMP8 and STX4 in pancreas. Interacts simultaneously with SNAPIN and SYN4. Interacts with STX1A. Interacts with STX12. Interacts tightly to multiple syntaxins and synaptobrevins/VAMPs. Interacts with ZDHHC13 (via ANK repeats). Interacts with ZDHHC17 (via ANK repeats). In terms of processing, (Microbial infection) Targeted and hydrolyzed by C.botulinum neurotoxin type A (BoNT/A, botA) which hydrolyzes the 202-Thr-|-Arg-203 bond; the in vitro reaction is not highly efficient. (Microbial infection) Targeted and hydrolyzed by C.botulinum neurotoxin type E (BoNT/E) which hydrolyzes the 185-Arg-|-Ile-186 bond; the in vitro reaction is more efficient than that of BoNT/A. As to expression, expressed in non-neuronal tissues.

Its subcellular location is the cell membrane. It localises to the synapse. The protein resides in the synaptosome. In terms of biological role, essential component of the high affinity receptor for the general membrane fusion machinery and an important regulator of transport vesicle docking and fusion. This Mus musculus (Mouse) protein is Synaptosomal-associated protein 23 (Snap23).